Reading from the N-terminus, the 752-residue chain is Photosystem I P700 chlorophyll a apoprotein A1 (752 aa).

8 consecutive transmembrane segments (helical) span residues 73-96 (IFAAHFGHLAVVTIWLSGMIFHGA), 159-182 (LYCTAIGGLVLAGLFLFAGWFHYH), 198-222 (LNHHLQVLLGCGSLGWAGHLIHVSA), 294-312 (IAHHHLAIAVVFIIAGHQY), 349-372 (WHAQLATNLAFLGSLTIIIAHHMY), 388-414 (LCIFTHHIWIGGFLIVGGAAHAAIFMV), 436-458 (AIISHLNWVCIFLGFHSFGLYIH), and 533-551 (FLIHHIHAFTIHVTVLILL). [4Fe-4S] cluster is bound by residues Cys575 and Cys584. A run of 2 helical transmembrane segments spans residues 591 to 612 (HVFLGLFWMYNSLSIVIFHFSW) and 666 to 688 (LSAYGLMFLGAHFVWAFSLMFLF). His677 contacts chlorophyll a'. Met685 and Tyr693 together coordinate chlorophyll a. Trp694 is a binding site for phylloquinone. The helical transmembrane segment at 726–746 (AVGVAHYLLGGIATTWAFFHA) threads the bilayer.

The protein belongs to the PsaA/PsaB family. In terms of assembly, the PsaA/B heterodimer binds the P700 chlorophyll special pair and subsequent electron acceptors. PSI consists of a core antenna complex that captures photons, and an electron transfer chain that converts photonic excitation into a charge separation. The cyanobacterial PSI reaction center is composed of one copy each of PsaA,B,C,D,E,F,I,J,K,L,M and X, and forms trimeric complexes. PSI electron transfer chain: 5 chlorophyll a, 1 chlorophyll a', 2 phylloquinones and 3 4Fe-4S clusters. PSI core antenna: 90 chlorophyll a, 22 carotenoids, 3 phospholipids and 1 galactolipid. P700 is a chlorophyll a/chlorophyll a' dimer, A0 is one or more chlorophyll a, A1 is one or both phylloquinones and FX is a shared 4Fe-4S iron-sulfur center. serves as cofactor.

The protein resides in the cellular thylakoid membrane. The catalysed reaction is reduced [plastocyanin] + hnu + oxidized [2Fe-2S]-[ferredoxin] = oxidized [plastocyanin] + reduced [2Fe-2S]-[ferredoxin]. Functionally, psaA and PsaB bind P700, the primary electron donor of photosystem I (PSI), as well as the electron acceptors A0, A1 and FX. PSI is a plastocyanin/cytochrome c6-ferredoxin oxidoreductase, converting photonic excitation into a charge separation, which transfers an electron from the donor P700 chlorophyll pair to the spectroscopically characterized acceptors A0, A1, FX, FA and FB in turn. Oxidized P700 is reduced on the lumenal side of the thylakoid membrane by plastocyanin or cytochrome c6. This chain is Photosystem I P700 chlorophyll a apoprotein A1, found in Nostoc sp. (strain PCC 7120 / SAG 25.82 / UTEX 2576).